The sequence spans 504 residues: Chromosomal replication initiator protein DnaA (504 aa).

The interval Met1–Asp109 is domain I, interacts with DnaA modulators. Residues Ala98–Ala162 form a disordered region. Positions Asp109–Ala125 are enriched in low complexity. The segment at Ser110 to Val163 is domain II. A domain III, AAA+ region region spans residues Asn164 to Ala380. ATP is bound by residues Gly208, Gly210, Lys211, and Thr212. Positions Ser381 to Arg504 are domain IV, binds dsDNA.

Belongs to the DnaA family. In terms of assembly, oligomerizes as a right-handed, spiral filament on DNA at oriC.

The protein resides in the cytoplasm. Its function is as follows. Plays an essential role in the initiation and regulation of chromosomal replication. ATP-DnaA binds to the origin of replication (oriC) to initiate formation of the DNA replication initiation complex once per cell cycle. Binds the DnaA box (a 9 base pair repeat at the origin) and separates the double-stranded (ds)DNA. Forms a right-handed helical filament on oriC DNA; dsDNA binds to the exterior of the filament while single-stranded (ss)DNA is stabiized in the filament's interior. The ATP-DnaA-oriC complex binds and stabilizes one strand of the AT-rich DNA unwinding element (DUE), permitting loading of DNA polymerase. After initiation quickly degrades to an ADP-DnaA complex that is not apt for DNA replication. Binds acidic phospholipids. Functionally, the probable consensus sequence for the DnaA box of this bacterium is 5'-TT(G/C)TCCACA-3'. The chain is Chromosomal replication initiator protein DnaA from Mycolicibacterium smegmatis (strain ATCC 700084 / mc(2)155) (Mycobacterium smegmatis).